The chain runs to 307 residues: Dof zinc finger protein DOF5.4 (307 aa).

Residues 51 to 105 (LKCPRCNSLNTKFCYYNNYNLSQPRHFCKNCRRYWTKGGVLRNVPVGGGCRKAKR) form a Dof-type zinc finger. Residues Cys-53, Cys-56, Cys-78, and Cys-81 each coordinate Zn(2+). The segment at 96-147 (VGGGCRKAKRSKTKQVPSSSSADKPTTTQDDHHVEEKSSTGSHSSSESSSLT) is disordered. The segment covering 109–123 (KQVPSSSSADKPTTT) has biased composition (polar residues). Residues 124–133 (QDDHHVEEKS) show a composition bias toward basic and acidic residues. The segment covering 134-147 (STGSHSSSESSSLT) has biased composition (low complexity).

The protein resides in the nucleus. Transcription factor that binds specifically to a 5'-AA[AG]G-3' consensus core sequence. Enhances the DNA binding of OBF transcription factors to OCS elements. This chain is Dof zinc finger protein DOF5.4 (DOF5.4), found in Arabidopsis thaliana (Mouse-ear cress).